A 73-amino-acid chain; its full sequence is uncharacterized protein (73 aa).

This is an uncharacterized protein from Homo sapiens (Human).